The primary structure comprises 1567 residues: Putative DEAH-box ATP-dependent helicase UM11114 (1567 aa).

Disordered stretches follow at residues 1-95 (MAPR…PGSK) and 670-734 (ESSV…ETRR). Polar residues predominate over residues 10-20 (IKSSGTTSSKA). Low complexity-rich tracts occupy residues 39 to 48 (TKAAKQQQTQ) and 55 to 73 (AISA…AASS). The segment covering 74–83 (AGGGGGGGQG) has biased composition (gly residues). Polar residues-rich tracts occupy residues 670–687 (ESSV…TPTG) and 713–726 (LQRQ…SPSY). The region spanning 746 to 924 (LGLIRSNRVV…FGKAPCISIP (179 aa)) is the Helicase ATP-binding domain. 759–766 (GETGCGKT) serves as a coordination point for ATP. A DEAH box motif is present at residues 871 to 874 (DEVH). A Helicase C-terminal domain is found at 1003–1184 (VVRYVVERAE…SLFLEVKSMR (182 aa)).

It belongs to the DEAD box helicase family. DEAH subfamily.

The polypeptide is Putative DEAH-box ATP-dependent helicase UM11114 (Mycosarcoma maydis (Corn smut fungus)).